A 354-amino-acid polypeptide reads, in one-letter code: Neutral protease 2 homolog MEP3 (354 aa).

Residues 1-19 form the signal peptide; the sequence is MHFTSSLLALVALTTQALA. Residues 20 to 179 constitute a propeptide that is removed on maturation; that stretch reads FPLNDLPKRD…QSAIPKLEKR (160 aa). Disulfide bonds link C186–C256 and C263–C281. H305 is a Zn(2+) binding site. Residue E306 is part of the active site. Zn(2+) contacts are provided by H309 and D320.

It belongs to the peptidase M35 family. Requires Zn(2+) as cofactor.

The protein resides in the secreted. The enzyme catalyses Preferential cleavage of bonds with hydrophobic residues in P1'. Also 3-Asn-|-Gln-4 and 8-Gly-|-Ser-9 bonds in insulin B chain.. In terms of biological role, secreted metalloproteinase that allows assimilation of proteinaceous substrates. Shows high activities on basic nuclear substrates such as histone and protamine. May be involved in virulence. This chain is Neutral protease 2 homolog MEP3 (MEP3), found in Coccidioides posadasii (strain C735) (Valley fever fungus).